A 394-amino-acid chain; its full sequence is L-lactate 2-monooxygenase (394 aa).

In terms of domain architecture, FMN hydroxy acid dehydrogenase spans 19–394 (VAPTLPMSYA…LTIDALRPTR (376 aa)). Residue tyrosine 45 participates in a 2-oxocarboxylate binding. FMN is bound by residues 98-100 (PIG), serine 129, and glutamine 151. Tyrosine 153 serves as a coordination point for a 2-oxocarboxylate. Threonine 179 is a binding site for FMN. Arginine 188 is an a 2-oxocarboxylate binding site. Lysine 267 serves as a coordination point for FMN. Histidine 291 serves as the catalytic Proton acceptor. Arginine 294 lines the a 2-oxocarboxylate pocket. FMN contacts are provided by residues 321–325 (DSGIR) and arginine 345.

The protein belongs to the FMN-dependent alpha-hydroxy acid dehydrogenase family. As to quaternary structure, homotetramer. The cofactor is FMN.

It carries out the reaction (S)-lactate + O2 = acetate + CO2 + H2O. Its function is as follows. Catalyzes the oxidative decarboxylation of (S)-lactate (L-lactate) to acetate and carbon dioxide. Its physiological role remains unknown. The protein is L-lactate 2-monooxygenase of Mycolicibacterium smegmatis (Mycobacterium smegmatis).